A 176-amino-acid polypeptide reads, in one-letter code: ATP-dependent protease subunit HslV (176 aa).

Residue Thr2 is part of the active site. Na(+) is bound by residues Gly157, Cys160, and Thr163.

This sequence belongs to the peptidase T1B family. HslV subfamily. A double ring-shaped homohexamer of HslV is capped on each side by a ring-shaped HslU homohexamer. The assembly of the HslU/HslV complex is dependent on binding of ATP.

It is found in the cytoplasm. The catalysed reaction is ATP-dependent cleavage of peptide bonds with broad specificity.. With respect to regulation, allosterically activated by HslU binding. Its function is as follows. Protease subunit of a proteasome-like degradation complex believed to be a general protein degrading machinery. This chain is ATP-dependent protease subunit HslV, found in Pseudomonas entomophila (strain L48).